The sequence spans 271 residues: uncharacterized protein (271 aa).

It belongs to the metallo-dependent hydrolases superfamily. Peptidase M19 family.

This is an uncharacterized protein from Klebsiella pneumoniae.